The following is a 1108-amino-acid chain: Eukaryotic translation initiation factor 2-alpha kinase 3 (1108 aa).

The first 27 residues, 1–27 (MERATQPRPRALLLLFLLLGCAAGISA), serve as a signal peptide directing secretion. The Lumenal segment spans residues 28–506 (VARARSLLAP…HYSKNIRKKD (479 aa)). The disordered stretch occupies residues 71–92 (EALPAASGEQESRATESDDDVE). The N-linked (GlcNAc...) asparagine glycan is linked to Asn253. Residues 507-527 (PILLLHWWKEIFGTILLCIVA) traverse the membrane as a helical segment. Residues 528–1108 (TTFIVRRLFH…SSTFSPLPGN (581 aa)) are Cytoplasmic-facing. Positions 542-563 (RQRKESETQCQTESKYDSVSAD) are disordered. The 485-residue stretch at 585 to 1069 (FEPIQCMGRG…ATDIIENAVF (485 aa)) folds into the Protein kinase domain. 591-599 (MGRGGFGVV) provides a ligand contact to ATP. Tyr611 carries the post-translational modification Phosphotyrosine; by autocatalysis. Lys614 contacts ATP. Residues 639–880 (EHPGIVRYFN…SPKVYLYIQM (242 aa)) form an insert loop region. Phosphoserine is present on Ser707. Disordered stretches follow at residues 772-818 (DEGH…RMNR) and 832-856 (FKHS…TTLS). Residues 785–798 (SPYTRSREGTSSSI) are compositionally biased toward polar residues. Thr794 carries the phosphothreonine modification. Residues 837-856 (SRSSSEATLSTSPTRPTTLS) are compositionally biased toward low complexity. Asp929 acts as the Proton acceptor in catalysis. The residue at position 974 (Thr974) is a Phosphothreonine. The segment at 1080–1108 (LRQRSRSLSSSGTKHSRQPSSTFSPLPGN) is disordered. Residue Ser1086 is modified to Phosphoserine. Residues 1097-1108 (QPSSTFSPLPGN) show a composition bias toward polar residues.

This sequence belongs to the protein kinase superfamily. Ser/Thr protein kinase family. GCN2 subfamily. In terms of assembly, forms dimers with HSPA5/BIP in resting cells. Homotetramerizes in response to endoplasmic reticulum (ER) stress, leading to its activation. Interacts with HSP90B1/GRP94. Interacts with DNAJC3; inhibiting EIF2AK3/PERK activity. Interacts with ATAD3A; ATAD3A and EIF2S1/eIF-2-alpha occupy a common binding site within the cytoplasmic loop of EIF2AK3/PERK, leading to prevent EIF2AK3/PERK association with its substrate EIF2S1/eIF-2-alpha. Interacts with MFN2. Interacts with TMEM33. Interacts with PDIA6. Interacts with LACC1. Oligomerization of the N-terminal ER luminal domain by ER stress promotes EIF2AK3/PERK trans-autophosphorylation of the C-terminal cytoplasmic kinase domain at multiple residues including Thr-974 on the kinase activation loop. Autophosphorylated at Tyr-611 following endoplasmic reticulum stress, leading to activate its activity. Dephosphorylated at Tyr-611 by PTPN1/PTP1B, leading to inactivate its enzyme activity. Phosphorylation at Thr-794 by AKT (AKT1, AKT2 and/or AKT3) inactivates EIF2AK3/PERK. In terms of processing, ADP-ribosylated by PARP16 upon ER stress, which increases kinase activity. Ubiquitous.

It localises to the endoplasmic reticulum membrane. The enzyme catalyses L-seryl-[protein] + ATP = O-phospho-L-seryl-[protein] + ADP + H(+). It carries out the reaction L-threonyl-[protein] + ATP = O-phospho-L-threonyl-[protein] + ADP + H(+). It catalyses the reaction L-tyrosyl-[protein] + ATP = O-phospho-L-tyrosyl-[protein] + ADP + H(+). Its activity is regulated as follows. Inhibited by HSPA5/BIP in absence of stress. Perturbation in protein folding in the endoplasmic reticulum (ER) promotes reversible dissociation from HSPA5/BIP and oligomerization, resulting in trans-autophosphorylation and kinase activity induction. Inactivated following phosphorylation at Thr-794 by AKT (AKT1, AKT2 and/or AKT3). Inhibited by ATAD3A at mitochondria-endoplasmic reticulum contact sites, providing a safe haven for mitochondrial protein translation during ER stress. Metabolic-stress sensing protein kinase that phosphorylates the alpha subunit of eukaryotic translation initiation factor 2 (EIF2S1/eIF-2-alpha) in response to various stress, such as unfolded protein response (UPR). Key effector of the integrated stress response (ISR) to unfolded proteins: EIF2AK3/PERK specifically recognizes and binds misfolded proteins, leading to its activation and EIF2S1/eIF-2-alpha phosphorylation. EIF2S1/eIF-2-alpha phosphorylation in response to stress converts EIF2S1/eIF-2-alpha in a global protein synthesis inhibitor, leading to a global attenuation of cap-dependent translation, while concomitantly initiating the preferential translation of ISR-specific mRNAs, such as the transcriptional activators ATF4 and QRICH1, and hence allowing ATF4- and QRICH1-mediated reprogramming. The EIF2AK3/PERK-mediated unfolded protein response increases mitochondrial oxidative phosphorylation by promoting ATF4-mediated expression of COX7A2L/SCAF1, thereby increasing formation of respiratory chain supercomplexes. In contrast to most subcellular compartments, mitochondria are protected from the EIF2AK3/PERK-mediated unfolded protein response due to EIF2AK3/PERK inhibition by ATAD3A at mitochondria-endoplasmic reticulum contact sites. In addition to EIF2S1/eIF-2-alpha, also phosphorylates NFE2L2/NRF2 in response to stress, promoting release of NFE2L2/NRF2 from the BCR(KEAP1) complex, leading to nuclear accumulation and activation of NFE2L2/NRF2. Serves as a critical effector of unfolded protein response (UPR)-induced G1 growth arrest due to the loss of cyclin-D1 (CCND1). Involved in control of mitochondrial morphology and function. In Rattus norvegicus (Rat), this protein is Eukaryotic translation initiation factor 2-alpha kinase 3 (Eif2ak3).